The chain runs to 137 residues: Putative pre-16S rRNA nuclease (137 aa).

The protein belongs to the YqgF nuclease family.

The protein resides in the cytoplasm. Its function is as follows. Could be a nuclease involved in processing of the 5'-end of pre-16S rRNA. The protein is Putative pre-16S rRNA nuclease of Buchnera aphidicola subsp. Baizongia pistaciae (strain Bp).